The following is a 619-amino-acid chain: Zinc finger CCCH domain-containing protein 67 (619 aa).

ANK repeat units lie at residues 52 to 81 (EPLTPLMVAAVYGSVGCLDALLSPPYLVDP) and 88 to 120 (SLSTPLHLAAAGGSASAPAAVSRLLAAGADPAL). C3H1-type zinc fingers lie at residues 213–241 (HYSCVPCPEFKKGAGCRRGDMCEYAHGVF) and 249–273 (QYRTRLCKDGVGCARRVCFFAHTPD). Residues 308–341 (SPGSSSFTPPLSPSAGGGGGGGGGSGGGGAWPQQ) form a disordered region. Gly residues predominate over residues 322–337 (AGGGGGGGGGSGGGGA).

The protein is Zinc finger CCCH domain-containing protein 67 of Oryza sativa subsp. japonica (Rice).